Here is a 349-residue protein sequence, read N- to C-terminus: DNA-directed RNA polymerase subunit alpha (349 aa).

Residues 1 to 226 form an alpha N-terminal domain (alpha-NTD) region; the sequence is MLIAQRPTLI…GLFGLAQELN (226 aa). The interval 241–349 is alpha C-terminal domain (alpha-CTD); that stretch reads AALAADLALP…GAEFIETEQY (109 aa). A disordered region spans residues 309–349; it reads KDSPPGFDPRQAVDTYGTDAYSPSFSDPSDDGAEFIETEQY. Acidic residues predominate over residues 336-349; that stretch reads PSDDGAEFIETEQY.

Belongs to the RNA polymerase alpha chain family. As to quaternary structure, homodimer. The RNAP catalytic core consists of 2 alpha, 1 beta, 1 beta' and 1 omega subunit. When a sigma factor is associated with the core the holoenzyme is formed, which can initiate transcription.

The catalysed reaction is RNA(n) + a ribonucleoside 5'-triphosphate = RNA(n+1) + diphosphate. Functionally, DNA-dependent RNA polymerase catalyzes the transcription of DNA into RNA using the four ribonucleoside triphosphates as substrates. The polypeptide is DNA-directed RNA polymerase subunit alpha (Frankia casuarinae (strain DSM 45818 / CECT 9043 / HFP020203 / CcI3)).